Reading from the N-terminus, the 135-residue chain is Transcription antitermination protein NusB (135 aa).

It belongs to the NusB family.

Involved in transcription antitermination. Required for transcription of ribosomal RNA (rRNA) genes. Binds specifically to the boxA antiterminator sequence of the ribosomal RNA (rrn) operons. The polypeptide is Transcription antitermination protein NusB (Clostridium acetobutylicum (strain ATCC 824 / DSM 792 / JCM 1419 / IAM 19013 / LMG 5710 / NBRC 13948 / NRRL B-527 / VKM B-1787 / 2291 / W)).